We begin with the raw amino-acid sequence, 245 residues long: 5-oxoprolinase subunit A (245 aa).

Belongs to the LamB/PxpA family. In terms of assembly, forms a complex composed of PxpA, PxpB and PxpC.

It carries out the reaction 5-oxo-L-proline + ATP + 2 H2O = L-glutamate + ADP + phosphate + H(+). Functionally, catalyzes the cleavage of 5-oxoproline to form L-glutamate coupled to the hydrolysis of ATP to ADP and inorganic phosphate. This is 5-oxoprolinase subunit A from Yersinia enterocolitica serotype O:8 / biotype 1B (strain NCTC 13174 / 8081).